The following is a 279-amino-acid chain: 4-diphosphocytidyl-2-C-methyl-D-erythritol kinase (279 aa).

K9 is a catalytic residue. 93 to 103 (PMGAGLGGGSS) serves as a coordination point for ATP. D135 is an active-site residue.

This sequence belongs to the GHMP kinase family. IspE subfamily.

It carries out the reaction 4-CDP-2-C-methyl-D-erythritol + ATP = 4-CDP-2-C-methyl-D-erythritol 2-phosphate + ADP + H(+). It functions in the pathway isoprenoid biosynthesis; isopentenyl diphosphate biosynthesis via DXP pathway; isopentenyl diphosphate from 1-deoxy-D-xylulose 5-phosphate: step 3/6. In terms of biological role, catalyzes the phosphorylation of the position 2 hydroxy group of 4-diphosphocytidyl-2C-methyl-D-erythritol. This chain is 4-diphosphocytidyl-2-C-methyl-D-erythritol kinase, found in Acinetobacter baylyi (strain ATCC 33305 / BD413 / ADP1).